A 624-amino-acid polypeptide reads, in one-letter code: Chaperone protein HtpG (624 aa).

Residues 1–336 (MKGQETRGFQ…SNDLPLNVSR (336 aa)) form an a; substrate-binding region. The interval 337–552 (EILQDSTVTR…ADEMSTQMAK (216 aa)) is b. The interval 553-624 (LFAAAGQAVP…IRRMNQLLVS (72 aa)) is c.

The protein belongs to the heat shock protein 90 family. In terms of assembly, homodimer.

It is found in the cytoplasm. In terms of biological role, molecular chaperone. Has ATPase activity. This Citrobacter koseri (strain ATCC BAA-895 / CDC 4225-83 / SGSC4696) protein is Chaperone protein HtpG.